The sequence spans 198 residues: dTTP/UTP pyrophosphatase (198 aa).

Asp-72 (proton acceptor) is an active-site residue.

This sequence belongs to the Maf family. YhdE subfamily. The cofactor is a divalent metal cation.

The protein localises to the cytoplasm. It catalyses the reaction dTTP + H2O = dTMP + diphosphate + H(+). The enzyme catalyses UTP + H2O = UMP + diphosphate + H(+). Its function is as follows. Nucleoside triphosphate pyrophosphatase that hydrolyzes dTTP and UTP. May have a dual role in cell division arrest and in preventing the incorporation of modified nucleotides into cellular nucleic acids. This chain is dTTP/UTP pyrophosphatase, found in Pseudomonas fluorescens (strain Pf0-1).